The sequence spans 229 residues: 2-C-methyl-D-erythritol 4-phosphate cytidylyltransferase (229 aa).

This sequence belongs to the IspD/TarI cytidylyltransferase family. IspD subfamily.

It carries out the reaction 2-C-methyl-D-erythritol 4-phosphate + CTP + H(+) = 4-CDP-2-C-methyl-D-erythritol + diphosphate. Its pathway is isoprenoid biosynthesis; isopentenyl diphosphate biosynthesis via DXP pathway; isopentenyl diphosphate from 1-deoxy-D-xylulose 5-phosphate: step 2/6. Functionally, catalyzes the formation of 4-diphosphocytidyl-2-C-methyl-D-erythritol from CTP and 2-C-methyl-D-erythritol 4-phosphate (MEP). The chain is 2-C-methyl-D-erythritol 4-phosphate cytidylyltransferase from Clostridium botulinum (strain Okra / Type B1).